Reading from the N-terminus, the 384-residue chain is Putative spore germination protein YfkR (384 aa).

The first 20 residues, 1–20 (MKKTIYKCVLPLLICILLTG), serve as a signal peptide directing secretion. Cysteine 21 carries N-palmitoyl cysteine lipidation. Cysteine 21 carries S-diacylglycerol cysteine lipidation.

It belongs to the GerABKC lipoprotein family.

It localises to the cell membrane. In terms of biological role, may be involved in spore germination. The polypeptide is Putative spore germination protein YfkR (yfkR) (Bacillus subtilis (strain 168)).